An 88-amino-acid chain; its full sequence is Putative membrane protein insertion efficiency factor (88 aa).

The tract at residues Val-68 to His-88 is disordered. The segment covering Pro-69–Cys-82 has biased composition (basic and acidic residues).

It belongs to the UPF0161 family.

Its subcellular location is the cell membrane. Its function is as follows. Could be involved in insertion of integral membrane proteins into the membrane. In Listeria monocytogenes serovar 1/2a (strain ATCC BAA-679 / EGD-e), this protein is Putative membrane protein insertion efficiency factor.